The chain runs to 463 residues: Glycine--tRNA ligase (463 aa).

2 residues coordinate substrate: Arg98 and Glu174. Residues 206-208 (RNE), 216-221 (FRTREF), 290-291 (EL), and 334-337 (GADR) contribute to the ATP site. Substrate is bound at residue 221–225 (FEQME). Residue 330–334 (EPSLG) coordinates substrate.

This sequence belongs to the class-II aminoacyl-tRNA synthetase family. Homodimer.

Its subcellular location is the cytoplasm. It catalyses the reaction tRNA(Gly) + glycine + ATP = glycyl-tRNA(Gly) + AMP + diphosphate. Its function is as follows. Catalyzes the attachment of glycine to tRNA(Gly). This Staphylococcus epidermidis (strain ATCC 35984 / DSM 28319 / BCRC 17069 / CCUG 31568 / BM 3577 / RP62A) protein is Glycine--tRNA ligase.